A 281-amino-acid polypeptide reads, in one-letter code: NAD-dependent protein deacetylase 1 (281 aa).

Positions 1–281 constitute a Deacetylase sirtuin-type domain; the sequence is MEEGAALEGV…FDQILDALDL (281 aa). NAD(+)-binding positions include 24 to 44 and 102 to 105; these read GAGV…GSLN and QNVD. His120 acts as the Proton acceptor in catalysis. Zn(2+) contacts are provided by Cys128, Cys131, Cys183, and Cys186. Residues 224 to 226, 250 to 252, and Val268 each bind NAD(+); these read GSS and NGG.

This sequence belongs to the sirtuin family. Class II subfamily. The cofactor is Zn(2+).

The protein resides in the cytoplasm. The catalysed reaction is N(6)-acetyl-L-lysyl-[protein] + NAD(+) + H2O = 2''-O-acetyl-ADP-D-ribose + nicotinamide + L-lysyl-[protein]. Functionally, NAD-dependent protein deacetylase which modulates the activities of several enzymes which are inactive in their acetylated form. The protein is NAD-dependent protein deacetylase 1 of Corynebacterium efficiens (strain DSM 44549 / YS-314 / AJ 12310 / JCM 11189 / NBRC 100395).